The chain runs to 215 residues: HTH-type transcriptional repressor FabR (215 aa).

The HTH tetR-type domain maps to 10–70 (KTRRSLVEAA…TMVDESGLML (61 aa)). The segment at residues 33–52 (SLREVAREAGIAPTSFYRHF) is a DNA-binding region (H-T-H motif).

As to quaternary structure, homodimer.

The protein resides in the cytoplasm. Functionally, represses the transcription of fabB, involved in unsaturated fatty acid (UFA) biosynthesis. By controlling UFA production, FabR directly influences the physical properties of the membrane bilayer. This Escherichia coli O139:H28 (strain E24377A / ETEC) protein is HTH-type transcriptional repressor FabR.